We begin with the raw amino-acid sequence, 217 residues long: Adapter protein MecA (217 aa).

This sequence belongs to the MecA family. As to quaternary structure, homodimer.

Functionally, enables the recognition and targeting of unfolded and aggregated proteins to the ClpC protease or to other proteins involved in proteolysis. This chain is Adapter protein MecA, found in Listeria monocytogenes serotype 4b (strain CLIP80459).